Here is a 258-residue protein sequence, read N- to C-terminus: Imidazole glycerol phosphate synthase subunit HisF (258 aa).

Catalysis depends on residues aspartate 12 and aspartate 131.

The protein belongs to the HisA/HisF family. As to quaternary structure, heterodimer of HisH and HisF.

The protein resides in the cytoplasm. It catalyses the reaction 5-[(5-phospho-1-deoxy-D-ribulos-1-ylimino)methylamino]-1-(5-phospho-beta-D-ribosyl)imidazole-4-carboxamide + L-glutamine = D-erythro-1-(imidazol-4-yl)glycerol 3-phosphate + 5-amino-1-(5-phospho-beta-D-ribosyl)imidazole-4-carboxamide + L-glutamate + H(+). It participates in amino-acid biosynthesis; L-histidine biosynthesis; L-histidine from 5-phospho-alpha-D-ribose 1-diphosphate: step 5/9. Its function is as follows. IGPS catalyzes the conversion of PRFAR and glutamine to IGP, AICAR and glutamate. The HisF subunit catalyzes the cyclization activity that produces IGP and AICAR from PRFAR using the ammonia provided by the HisH subunit. The chain is Imidazole glycerol phosphate synthase subunit HisF from Arthrobacter sp. (strain FB24).